The primary structure comprises 2357 residues: Protein transport protein Sec16A (2357 aa).

2 disordered regions span residues 1 to 25 and 57 to 303; these read MQPPPQTVPSGMAGPPPAGNPRSVF and FSRQ…STFR. Composition is skewed to low complexity over residues 64-76 and 210-227; these read STPLGSSSKSSPP and QMPGQWGPVQGGPQPSGQ. The segment covering 285–303 has biased composition (polar residues); the sequence is HLQSGSHLANNSDPESTFR. Serine 296, serine 314, and serine 331 each carry phosphoserine. Disordered regions lie at residues 335–359, 508–540, 553–603, 758–828, 924–987, 1006–1038, and 1059–1151; these read NPLARGDSPENRTHHPLGAGAGSGC, APDATLHTVHPDSVSSSYSSRSHGRLSGSARPQ, KPED…TGIF, VQPP…NPPV, LLVQ…SSHQ, VNVYNPSHSDSLASQQSVASHPRQSGPGAPNLD, and QELV…APGP. A compositionally biased stretch (low complexity) spans 520-536; sequence SVSSSYSSRSHGRLSGS. 5 positions are modified to phosphoserine: serine 559, serine 569, serine 587, serine 589, and serine 592. Threonine 593 carries the phosphothreonine modification. Phosphoserine is present on serine 595. 2 stretches are compositionally biased toward polar residues: residues 766–778 and 803–825; these read SGQQSRNPSSAAP and LQSQASSGYASLLSSPPTESLQN. The segment covering 1006-1028 has biased composition (polar residues); it reads VNVYNPSHSDSLASQQSVASHPR. A required for localization to endoplasmic reticulum exit sites region spans residues 1019–1890; sequence SQQSVASHPR…QQVERQIKEG (872 aa). At serine 1069 the chain carries Phosphoserine. Positions 1080-1101 are enriched in polar residues; the sequence is ELSNPESLPAQGQAQNSAQSPA. The interval 1101–1400 is interaction with MIA3; sequence ASLVLVDAGQ…EAPLPPGSFH (300 aa). The segment at 1102-1405 is required for endoplasmic reticulum localization; it reads SLVLVDAGQQ…PGSFHGDFAY (304 aa). The span at 1118–1131 shows a compositional bias: low complexity; it reads QSSSVSLVSSGSGQ. The segment covering 1138–1151 has biased composition (pro residues); it reads QPWPQPVPALAPGP. Phosphoserine occurs at positions 1207, 1229, and 1305. The segment at 1215-1248 is disordered; it reads YPEPERPSSRASHSSERPPPRQGYPEGYYSSKSG. The segment covering 1216-1233 has biased composition (basic and acidic residues); the sequence is PEPERPSSRASHSSERPP. Over residues 1307-1322 the composition is skewed to basic and acidic residues; sequence FGDRPEKRDNNWRYDP. The interval 1307–1378 is disordered; it reads FGDRPEKRDN…SLSSHSHQSQ (72 aa). Position 1325 is a phosphothreonine (threonine 1325). Phosphoserine occurs at positions 1327, 1347, 1350, 1356, 1359, 1362, 1369, 1573, and 1601. Over residues 1333–1354 the composition is skewed to basic and acidic residues; it reads DPHRDPYGEEVDRRSVHSEHSA. Residues 1356 to 1375 show a composition bias toward low complexity; sequence SLHSAHSLASRRSSLSSHSH. The tract at residues 1434-1890 is central conserved domain (CCD); mediates interaction with RNF183, LRRK2 and SEC13; the sequence is QVSSRPTSPE…QQVERQIKEG (457 aa). Residue threonine 1907 is modified to Phosphothreonine. Serine 1939, serine 1964, serine 2022, and serine 2042 each carry phosphoserine. Disordered regions lie at residues 2049–2110, 2141–2181, and 2226–2328; these read KFAN…SWFF, VNLN…PVNM, and NLFV…MPFY. Threonine 2054 carries the phosphothreonine modification. Residues serine 2056, serine 2073, and serine 2083 each carry the phosphoserine modification. Positions 2087–2106 are enriched in basic and acidic residues; the sequence is ETKRPGQAAKKETKEPKKGE. Positions 2106–2357 are required for interaction with SEC23A; sequence ESWFFRWLPG…IGQRKHLVLN (252 aa). Residues serine 2271 and serine 2291 each carry the phosphoserine modification. 2 stretches are compositionally biased toward low complexity: residues 2289–2302 and 2310–2324; these read ELSRCSSMSSLSRE and APGDLPAAGGPPSGA.

Belongs to the SEC16 family. SEC16A and SEC16B are each present in multiple copies in a heteromeric complex. Interacts with SEC23A. Interacts with RNF183 and RNF152. Interacts with LRRK2 (via ROC domain). Interacts with SEC13. Interacts with RAB10. Interacts with MIA3. Interacts with GORASP2 in response to ER stress. Ubiquitous. Expressed at higher levels in the pancreas.

The protein resides in the endoplasmic reticulum membrane. The protein localises to the golgi apparatus membrane. It localises to the cytoplasm. It is found in the perinuclear region. Its subcellular location is the cytosol. The protein resides in the microsome membrane. In terms of biological role, acts as a molecular scaffold that plays a key role in the organization of the endoplasmic reticulum exit sites (ERES), also known as transitional endoplasmic reticulum (tER). SAR1A-GTP-dependent assembly of SEC16A on the ER membrane forms an organized scaffold defining an ERES. Required for secretory cargo traffic from the endoplasmic reticulum to the Golgi apparatus. Mediates the recruitment of MIA3/TANGO to ERES. Regulates both conventional (ER/Golgi-dependent) and GORASP2-mediated unconventional (ER/Golgi-independent) trafficking of CFTR to cell membrane. Positively regulates the protein stability of E3 ubiquitin-protein ligases RNF152 and RNF183 and the ER localization of RNF183. Acts as a RAB10 effector in the regulation of insulin-induced SLC2A4/GLUT4 glucose transporter-enriched vesicles delivery to the cell membrane in adipocytes. The chain is Protein transport protein Sec16A (SEC16A) from Homo sapiens (Human).